The chain runs to 353 residues: UDP-3-O-acylglucosamine N-acyltransferase (353 aa).

His-242 acts as the Proton acceptor in catalysis.

It belongs to the transferase hexapeptide repeat family. LpxD subfamily. In terms of assembly, homotrimer.

The catalysed reaction is a UDP-3-O-[(3R)-3-hydroxyacyl]-alpha-D-glucosamine + a (3R)-hydroxyacyl-[ACP] = a UDP-2-N,3-O-bis[(3R)-3-hydroxyacyl]-alpha-D-glucosamine + holo-[ACP] + H(+). The protein operates within bacterial outer membrane biogenesis; LPS lipid A biosynthesis. Its function is as follows. Catalyzes the N-acylation of UDP-3-O-acylglucosamine using 3-hydroxyacyl-ACP as the acyl donor. Is involved in the biosynthesis of lipid A, a phosphorylated glycolipid that anchors the lipopolysaccharide to the outer membrane of the cell. The sequence is that of UDP-3-O-acylglucosamine N-acyltransferase from Pseudomonas aeruginosa (strain UCBPP-PA14).